The sequence spans 320 residues: Formimidoylglutamase (320 aa).

6 residues coordinate Mn(2+): His-125, Asp-153, His-155, Asp-157, Asp-244, and Asp-246.

It belongs to the arginase family. The cofactor is Mn(2+).

It carries out the reaction N-formimidoyl-L-glutamate + H2O = formamide + L-glutamate. It participates in amino-acid degradation; L-histidine degradation into L-glutamate; L-glutamate from N-formimidoyl-L-glutamate (hydrolase route): step 1/1. In terms of biological role, catalyzes the conversion of N-formimidoyl-L-glutamate to L-glutamate and formamide. This is Formimidoylglutamase from Rhodococcus opacus (strain B4).